Consider the following 289-residue polypeptide: Acetyl-coenzyme A carboxylase carboxyl transferase subunit beta 2 (289 aa).

One can recognise a CoA carboxyltransferase N-terminal domain in the interval 25 to 289; that stretch reads VWTKCPSCDQ…TNTSIRLEVK (265 aa). Residues Cys29, Cys32, Cys48, and Cys51 each coordinate Zn(2+). The C4-type zinc finger occupies 29-51; the sequence is CPSCDQVLYRIALKENLEVCPKC.

It belongs to the AccD/PCCB family. As to quaternary structure, acetyl-CoA carboxylase is a heterohexamer composed of biotin carboxyl carrier protein (AccB), biotin carboxylase (AccC) and two subunits each of ACCase subunit alpha (AccA) and ACCase subunit beta (AccD). Requires Zn(2+) as cofactor.

It localises to the cytoplasm. The enzyme catalyses N(6)-carboxybiotinyl-L-lysyl-[protein] + acetyl-CoA = N(6)-biotinyl-L-lysyl-[protein] + malonyl-CoA. It functions in the pathway lipid metabolism; malonyl-CoA biosynthesis; malonyl-CoA from acetyl-CoA: step 1/1. Functionally, component of the acetyl coenzyme A carboxylase (ACC) complex. Biotin carboxylase (BC) catalyzes the carboxylation of biotin on its carrier protein (BCCP) and then the CO(2) group is transferred by the transcarboxylase to acetyl-CoA to form malonyl-CoA. The protein is Acetyl-coenzyme A carboxylase carboxyl transferase subunit beta 2 of Vibrio parahaemolyticus serotype O3:K6 (strain RIMD 2210633).